A 332-amino-acid chain; its full sequence is Inositol 2-dehydrogenase 2 (332 aa).

This sequence belongs to the Gfo/Idh/MocA family. Homotetramer.

It catalyses the reaction myo-inositol + NAD(+) = scyllo-inosose + NADH + H(+). Functionally, involved in the oxidation of myo-inositol (MI) to 2-keto-myo-inositol (2KMI or 2-inosose). In Paenarthrobacter aurescens (strain TC1), this protein is Inositol 2-dehydrogenase 2.